The sequence spans 641 residues: 1-deoxy-D-xylulose-5-phosphate synthase (641 aa).

Thiamine diphosphate-binding positions include His79 and Ala120–Ser122. Asp151 serves as a coordination point for Mg(2+). Thiamine diphosphate contacts are provided by residues Gly152–Ser153, Asn180, Tyr290, and Glu372. Asn180 lines the Mg(2+) pocket.

The protein belongs to the transketolase family. DXPS subfamily. As to quaternary structure, homodimer. Requires Mg(2+) as cofactor. Thiamine diphosphate is required as a cofactor.

It catalyses the reaction D-glyceraldehyde 3-phosphate + pyruvate + H(+) = 1-deoxy-D-xylulose 5-phosphate + CO2. It participates in metabolic intermediate biosynthesis; 1-deoxy-D-xylulose 5-phosphate biosynthesis; 1-deoxy-D-xylulose 5-phosphate from D-glyceraldehyde 3-phosphate and pyruvate: step 1/1. In terms of biological role, catalyzes the acyloin condensation reaction between C atoms 2 and 3 of pyruvate and glyceraldehyde 3-phosphate to yield 1-deoxy-D-xylulose-5-phosphate (DXP). The sequence is that of 1-deoxy-D-xylulose-5-phosphate synthase from Rhodopseudomonas palustris (strain BisB18).